Here is a 608-residue protein sequence, read N- to C-terminus: Elongation factor 4 (608 aa).

The region spanning 11–193 is the tr-type G domain; the sequence is KKIRNFSIIA…QIVEKVPEPS (183 aa). GTP is bound by residues 23–28 and 140–143; these read DHGKST and NKID.

The protein belongs to the TRAFAC class translation factor GTPase superfamily. Classic translation factor GTPase family. LepA subfamily.

It is found in the cell membrane. It catalyses the reaction GTP + H2O = GDP + phosphate + H(+). In terms of biological role, required for accurate and efficient protein synthesis under certain stress conditions. May act as a fidelity factor of the translation reaction, by catalyzing a one-codon backward translocation of tRNAs on improperly translocated ribosomes. Back-translocation proceeds from a post-translocation (POST) complex to a pre-translocation (PRE) complex, thus giving elongation factor G a second chance to translocate the tRNAs correctly. Binds to ribosomes in a GTP-dependent manner. The chain is Elongation factor 4 from Listeria welshimeri serovar 6b (strain ATCC 35897 / DSM 20650 / CCUG 15529 / CIP 8149 / NCTC 11857 / SLCC 5334 / V8).